A 602-amino-acid chain; its full sequence is Threonine--tRNA ligase (602 aa).

The catalytic stretch occupies residues D208–P499. 3 residues coordinate Zn(2+): C300, H351, and H476.

This sequence belongs to the class-II aminoacyl-tRNA synthetase family. In terms of assembly, homodimer. The cofactor is Zn(2+).

It localises to the cytoplasm. The catalysed reaction is tRNA(Thr) + L-threonine + ATP = L-threonyl-tRNA(Thr) + AMP + diphosphate + H(+). Functionally, catalyzes the attachment of threonine to tRNA(Thr) in a two-step reaction: L-threonine is first activated by ATP to form Thr-AMP and then transferred to the acceptor end of tRNA(Thr). Also edits incorrectly charged L-seryl-tRNA(Thr). This is Threonine--tRNA ligase from Campylobacter jejuni (strain RM1221).